A 291-amino-acid chain; its full sequence is Gamma-sarcoglycan (291 aa).

Residues Met-1–Tyr-37 are Cytoplasmic-facing. The chain crosses the membrane as a helical; Signal-anchor for type II membrane protein span at residues Leu-38–Leu-58. Residues Lys-59–Leu-291 are Extracellular-facing. An N-linked (GlcNAc...) asparagine glycan is attached at Asn-110. 2 disulfides stabilise this stretch: Cys-265-Cys-290 and Cys-267-Cys-283.

The protein belongs to the sarcoglycan beta/delta/gamma/zeta family. As to quaternary structure, interacts with the syntrophin SNTA1. Cross-link to form 2 major subcomplexes: one consisting of SGCB, SGCD and SGCG and the other consisting of SGCB and SGCD. The association between SGCB and SGCG is particularly strong while SGCA is loosely associated with the other sarcoglycans. Interacts with FLNC. Expressed in skeletal and heart muscle.

The protein localises to the cell membrane. It is found in the sarcolemma. The protein resides in the cytoplasm. Its subcellular location is the cytoskeleton. Functionally, component of the sarcoglycan complex, a subcomplex of the dystrophin-glycoprotein complex which forms a link between the F-actin cytoskeleton and the extracellular matrix. The protein is Gamma-sarcoglycan (SGCG) of Homo sapiens (Human).